Reading from the N-terminus, the 436-residue chain is Transcription termination factor Rho (436 aa).

The region spanning 65–140 (LVFVKGVLEI…IRMESVNGLP (76 aa)) is the Rho RNA-BD domain. Residues 185–190 (GKGQRG), 197–202 (KAGKTV), and arginine 228 contribute to the ATP site.

It belongs to the Rho family. In terms of assembly, homohexamer. The homohexamer assembles into an open ring structure.

Facilitates transcription termination by a mechanism that involves Rho binding to the nascent RNA, activation of Rho's RNA-dependent ATPase activity, and release of the mRNA from the DNA template. In Aquifex aeolicus (strain VF5), this protein is Transcription termination factor Rho.